A 43-amino-acid chain; its full sequence is Neurotrophin-3 (43 aa).

Belongs to the NGF-beta family.

The protein localises to the secreted. Seems to promote the survival of visceral and proprioceptive sensory neurons. The polypeptide is Neurotrophin-3 (ntf3) (Raja clavata (Thornback ray)).